The chain runs to 623 residues: Glucokinase regulatory protein (623 aa).

SIS domains are found at residues 90-286 (VQEV…QGVV) and 320-476 (VGIS…VQKF). Beta-D-fructose 1-phosphate-binding positions include 109-110 (TS), glutamate 153, and 179-181 (SVG). 109–110 (TS) provides a ligand contact to beta-D-fructose 6-phosphate. Residue 179-181 (SVG) coordinates beta-D-fructose 6-phosphate. Positions 199 to 200 (AV) are important for interaction with GCK. Glutamate 348 contributes to the beta-D-fructose 1-phosphate binding site. The segment at 463-465 (LLF) is essential for interaction with GCK.

The protein belongs to the GCKR family. In terms of assembly, interacts (fructose 6-phosphate bound form) with GCK.

The protein localises to the cytoplasm. It localises to the nucleus. It is found in the mitochondrion. Functionally, regulates glucokinase (GCK) by forming an inactive complex with this enzyme. Acts by promoting GCK recruitment to the nucleus, possibly to provide a reserve of GCK that can be quickly released in the cytoplasm after a meal. The affinity of GCKR for GCK is modulated by fructose metabolites: GCKR with bound fructose 6-phosphate has increased affinity for GCK, while GCKR with bound fructose 1-phosphate has strongly decreased affinity for GCK and does not inhibit GCK activity. The protein is Glucokinase regulatory protein of Mus musculus (Mouse).